We begin with the raw amino-acid sequence, 336 residues long: Biotin synthase (336 aa).

Positions 54–281 (NAIQLSTLLS…KAMVRLSAGR (228 aa)) constitute a Radical SAM core domain. Positions 69, 73, and 76 each coordinate [4Fe-4S] cluster. The [2Fe-2S] cluster site is built by cysteine 113, cysteine 144, cysteine 204, and arginine 276.

It belongs to the radical SAM superfamily. Biotin synthase family. In terms of assembly, homodimer. It depends on [4Fe-4S] cluster as a cofactor. [2Fe-2S] cluster serves as cofactor.

The enzyme catalyses (4R,5S)-dethiobiotin + (sulfur carrier)-SH + 2 reduced [2Fe-2S]-[ferredoxin] + 2 S-adenosyl-L-methionine = (sulfur carrier)-H + biotin + 2 5'-deoxyadenosine + 2 L-methionine + 2 oxidized [2Fe-2S]-[ferredoxin]. The protein operates within cofactor biosynthesis; biotin biosynthesis; biotin from 7,8-diaminononanoate: step 2/2. Its function is as follows. Catalyzes the conversion of dethiobiotin (DTB) to biotin by the insertion of a sulfur atom into dethiobiotin via a radical-based mechanism. This chain is Biotin synthase, found in Burkholderia pseudomallei (strain 1106a).